The sequence spans 144 residues: Large ribosomal subunit protein uL11 (144 aa).

This sequence belongs to the universal ribosomal protein uL11 family. Part of the ribosomal stalk of the 50S ribosomal subunit. Interacts with L10 and the large rRNA to form the base of the stalk. L10 forms an elongated spine to which L12 dimers bind in a sequential fashion forming a multimeric L10(L12)X complex. In terms of processing, one or more lysine residues are methylated.

In terms of biological role, forms part of the ribosomal stalk which helps the ribosome interact with GTP-bound translation factors. This Neisseria meningitidis serogroup C (strain 053442) protein is Large ribosomal subunit protein uL11.